The following is a 181-amino-acid chain: UPF0398 protein LMOf2365_1918 (181 aa).

This sequence belongs to the UPF0398 family.

The chain is UPF0398 protein LMOf2365_1918 from Listeria monocytogenes serotype 4b (strain F2365).